The sequence spans 84 residues: uncharacterized protein (84 aa).

Low complexity predominate over residues 1-14 (MQKLNKSSSKGKNN). The interval 1 to 84 (MQKLNKSSSK…VDKGERKESE (84 aa)) is disordered. Gly residues predominate over residues 28–40 (STYGFGPYGGGGF). Basic and acidic residues-rich tracts occupy residues 53–65 (DTKK…EEGT) and 73–84 (KLVDKGERKESE).

This is an uncharacterized protein from Schizosaccharomyces pombe (strain 972 / ATCC 24843) (Fission yeast).